Reading from the N-terminus, the 1104-residue chain is Inhibitory regulator protein BUD2/CLA2 (1104 aa).

Ser2 bears the N-acetylserine mark. One can recognise a C2 domain in the interval 316–444 (RSEYLSITGS…RYNKETRLPI (129 aa)). The Ras-GAP domain maps to 536–753 (AKIDGTVSRI…NDLLDYIDKM (218 aa)). Residue Ser854 is modified to Phosphoserine. The segment at 1027 to 1104 (NPKSSNKTSV…FKKKKETGGS (78 aa)) is disordered. 2 stretches are compositionally biased toward polar residues: residues 1029–1043 (KSSNKTSVHGTSSEN) and 1052–1069 (LPNSQGKGNLGNRFSPTK). Positions 1090–1104 (KLTRWFKKKKETGGS) are enriched in basic residues.

Stimulates the GTPase activity of BUD1/RSR1. Participates in the regulation of bud-site selection. The protein is Inhibitory regulator protein BUD2/CLA2 (BUD2) of Saccharomyces cerevisiae (strain ATCC 204508 / S288c) (Baker's yeast).